The following is a 95-amino-acid chain: Aspartyl/glutamyl-tRNA(Asn/Gln) amidotransferase subunit C (95 aa).

The protein belongs to the GatC family. As to quaternary structure, heterotrimer of A, B and C subunits.

It carries out the reaction L-glutamyl-tRNA(Gln) + L-glutamine + ATP + H2O = L-glutaminyl-tRNA(Gln) + L-glutamate + ADP + phosphate + H(+). The catalysed reaction is L-aspartyl-tRNA(Asn) + L-glutamine + ATP + H2O = L-asparaginyl-tRNA(Asn) + L-glutamate + ADP + phosphate + 2 H(+). Functionally, allows the formation of correctly charged Asn-tRNA(Asn) or Gln-tRNA(Gln) through the transamidation of misacylated Asp-tRNA(Asn) or Glu-tRNA(Gln) in organisms which lack either or both of asparaginyl-tRNA or glutaminyl-tRNA synthetases. The reaction takes place in the presence of glutamine and ATP through an activated phospho-Asp-tRNA(Asn) or phospho-Glu-tRNA(Gln). The chain is Aspartyl/glutamyl-tRNA(Asn/Gln) amidotransferase subunit C from Xanthobacter autotrophicus (strain ATCC BAA-1158 / Py2).